Here is a 206-residue protein sequence, read N- to C-terminus: Probable GTP-binding protein EngB (206 aa).

In terms of domain architecture, EngB-type G spans 7-195 (DCDEVVLLGR…EEALQAIFSD (189 aa)). GTP is bound by residues 15–22 (GRSNVGKS), 41–45 (GVTRS), 60–63 (DLPG), 140–143 (NKID), and 175–177 (ISA). 2 residues coordinate Mg(2+): Ser-22 and Thr-43.

It belongs to the TRAFAC class TrmE-Era-EngA-EngB-Septin-like GTPase superfamily. EngB GTPase family. Requires Mg(2+) as cofactor.

Functionally, necessary for normal cell division and for the maintenance of normal septation. The chain is Probable GTP-binding protein EngB from Haloquadratum walsbyi (strain DSM 16790 / HBSQ001).